Reading from the N-terminus, the 143-residue chain is Ribosome-binding factor A (143 aa).

The tract at residues lysine 119–aspartate 143 is disordered. The span at glutamine 122–serine 133 shows a compositional bias: polar residues.

The protein belongs to the RbfA family. Monomer. Binds 30S ribosomal subunits, but not 50S ribosomal subunits or 70S ribosomes.

The protein localises to the cytoplasm. Its function is as follows. One of several proteins that assist in the late maturation steps of the functional core of the 30S ribosomal subunit. Associates with free 30S ribosomal subunits (but not with 30S subunits that are part of 70S ribosomes or polysomes). Required for efficient processing of 16S rRNA. May interact with the 5'-terminal helix region of 16S rRNA. This Shewanella frigidimarina (strain NCIMB 400) protein is Ribosome-binding factor A.